Consider the following 158-residue polypeptide: Endoribonuclease YbeY (158 aa).

Positions 122, 126, and 132 each coordinate Zn(2+).

Belongs to the endoribonuclease YbeY family. Zn(2+) serves as cofactor.

The protein resides in the cytoplasm. In terms of biological role, single strand-specific metallo-endoribonuclease involved in late-stage 70S ribosome quality control and in maturation of the 3' terminus of the 16S rRNA. The protein is Endoribonuclease YbeY of Bacillus licheniformis (strain ATCC 14580 / DSM 13 / JCM 2505 / CCUG 7422 / NBRC 12200 / NCIMB 9375 / NCTC 10341 / NRRL NRS-1264 / Gibson 46).